The chain runs to 189 residues: UPF0301 protein PFL_5830 (189 aa).

It belongs to the UPF0301 (AlgH) family.

This is UPF0301 protein PFL_5830 from Pseudomonas fluorescens (strain ATCC BAA-477 / NRRL B-23932 / Pf-5).